The following is a 503-amino-acid chain: Probable cytosol aminopeptidase (503 aa).

The Mn(2+) site is built by lysine 270 and aspartate 275. The active site involves lysine 282. 3 residues coordinate Mn(2+): aspartate 293, aspartate 352, and glutamate 354. The active site involves arginine 356.

Belongs to the peptidase M17 family. The cofactor is Mn(2+).

It localises to the cytoplasm. It catalyses the reaction Release of an N-terminal amino acid, Xaa-|-Yaa-, in which Xaa is preferably Leu, but may be other amino acids including Pro although not Arg or Lys, and Yaa may be Pro. Amino acid amides and methyl esters are also readily hydrolyzed, but rates on arylamides are exceedingly low.. It carries out the reaction Release of an N-terminal amino acid, preferentially leucine, but not glutamic or aspartic acids.. Its function is as follows. Presumably involved in the processing and regular turnover of intracellular proteins. Catalyzes the removal of unsubstituted N-terminal amino acids from various peptides. This chain is Probable cytosol aminopeptidase, found in Salmonella arizonae (strain ATCC BAA-731 / CDC346-86 / RSK2980).